Reading from the N-terminus, the 482-residue chain is Auxin transporter-like protein 2 (482 aa).

Residues 1–58 (MVPAGDQAEEAIVADAGKEEAEVRAAMGVEQDGKFSMTSLLWHGGSVWDAWFSCASNQ) lie on the Cytoplasmic side of the membrane. Residues 59–76 (VAQVLLTLPYSFSQLGML) traverse the membrane as a helical segment. Over 77-78 (SG) the chain is Extracellular. A helical membrane pass occupies residues 79-99 (LLLQVFYGLMGSWTAYLISVL). Residues 100–134 (YVEYRARKEKEGVSFKNHVIQWFEVLDGLLGPYWK) lie on the Cytoplasmic side of the membrane. A helical transmembrane segment spans residues 135–155 (AAGLAFNCTFLLFGSVIQLIA). Over 156–171 (CASNIYYINDRLDKRT) the chain is Extracellular. The chain crosses the membrane as a helical span at residues 172–192 (WTYIFGACCSTTVFIPSFHNY). A topological domain (cytoplasmic) is located at residue R193. Residues 194–214 (IWSFLGLGMTTYTAWYLAIAA) form a helical membrane-spanning segment. At 215-231 (AVHGQVDGVTHSGPSKM) the chain is on the extracellular side. Residues 232 to 252 (VLYFTGATNILYTFGGHAVTV) traverse the membrane as a helical segment. At 253–265 (EIMHAMWKPQKFK) the chain is on the cytoplasmic side. Residues 266–286 (YIYLVATLYVFTLTLPSASAM) form a helical membrane-spanning segment. Over 287–313 (YWAFGDALLTHSNAFSLLPRSGWRDAA) the chain is Extracellular. The chain crosses the membrane as a helical span at residues 314-334 (VILMLIHQFITFGFACTPLYF). The Cytoplasmic portion of the chain corresponds to 335-355 (VWEKAIGMHGTRSVLTRALAR). A helical membrane pass occupies residues 356-376 (LPIVVPIWFLAIIFPFFGPIN). Residue S377 is a topological domain, extracellular. Residues 378-398 (AVGALLVSFTVYIIPSLSHIL) form a helical membrane-spanning segment. Residues 399 to 423 (TYRSASARLNAAEKPPPFLPSWSGM) lie on the Cytoplasmic side of the membrane. Residues 424–444 (FVVNVFVVAWVLVVGFGLGGW) traverse the membrane as a helical segment. Residues 445–482 (ASVTNFIKQIDTFGLFAKCYQCPPRAHAGAPLPAPPRH) lie on the Extracellular side of the membrane.

The protein belongs to the amino acid/polyamine transporter 2 family. Amino acid/auxin permease (AAAP) (TC 2.A.18.1) subfamily.

Its subcellular location is the cell membrane. In terms of biological role, carrier protein involved in proton-driven auxin influx. May mediate the formation of auxin gradient from developing leaves (site of auxin biosynthesis) to tips. The sequence is that of Auxin transporter-like protein 2 from Oryza sativa subsp. japonica (Rice).